The chain runs to 529 residues: BAR/IMD domain-containing adapter protein 2-like 2 (529 aa).

The region spanning 1-239 (MAPEMDQFYR…HSPGLLGPVL (239 aa)) is the IMD domain. Disordered regions lie at residues 221-332 (EASR…GGAR) and 399-529 (NPLN…PLIR). 3 positions are modified to phosphoserine: S231, S272, and S304. Over residues 301 to 317 (SASSLYSSSTQRSRSNS) the composition is skewed to low complexity. The segment covering 321-331 (RPGGGGGGGGA) has biased composition (gly residues). One can recognise an SH3 domain in the interval 329-392 (GGARRVRALV…PEAYVKPLDE (64 aa)). Over residues 439 to 459 (GNSTASSDYWDGQSRSRTPSH) the composition is skewed to polar residues. A compositionally biased stretch (low complexity) spans 473–484 (PSSRRSSMGSMG). S479 and S482 each carry phosphoserine.

It is found in the cell membrane. Its subcellular location is the cell junction. The protein localises to the cytoplasmic vesicle membrane. In terms of biological role, phosphoinositides-binding protein that induces the formation of planar or gently curved membrane structures. Binds to phosphoinositides, including to phosphatidylinositol 4,5-bisphosphate (PtdIns(4,5)P2) headgroups. There seems to be no clear preference for a specific phosphoinositide. The chain is BAR/IMD domain-containing adapter protein 2-like 2 (BAIAP2L2) from Bos taurus (Bovine).